Reading from the N-terminus, the 484-residue chain is Carbohydrate sulfotransferase 7 (484 aa).

Residues 1 to 12 (MKGRRRRRREYC) lie on the Cytoplasmic side of the membrane. The chain crosses the membrane as a helical; Signal-anchor for type II membrane protein span at residues 13-33 (KFTLLLALYTLLLLLVPSVLD). The Lumenal portion of the chain corresponds to 34–484 (SHSEQDKGRN…PLETKANWAV (451 aa)). A disordered region spans residues 71–90 (RSLAEGNPDRSPGSPGNLSA). Residue Asn87 is glycosylated (N-linked (GlcNAc...) asparagine). Residue 108-114 (WRTGSSF) coordinates 3'-phosphoadenylyl sulfate. Asn184 carries an N-linked (GlcNAc...) asparagine glycan. 276–284 (RDPRAVHNS) serves as a coordination point for 3'-phosphoadenylyl sulfate. Residue Asn405 is glycosylated (N-linked (GlcNAc...) asparagine). The residue at position 460 (Ser460) is a Phosphoserine. A compositionally biased stretch (basic and acidic residues) spans 460–473 (SGDERDRKTVREGE). The tract at residues 460 to 484 (SGDERDRKTVREGETPLETKANWAV) is disordered.

Belongs to the sulfotransferase 1 family. Gal/GlcNAc/GalNAc subfamily. In terms of tissue distribution, widely expressed. Highly expressed in kidney. Expressed at lower level in heart, lung and liver.

The protein resides in the golgi apparatus membrane. The catalysed reaction is chondroitin beta-D-glucuronate + n 3'-phosphoadenylyl sulfate = chondroitin 6'-sulfate + n adenosine 3',5'-bisphosphate + n H(+). Functionally, sulfotransferase that utilizes 3'-phospho-5'-adenylyl sulfate (PAPS) as sulfonate donor to catalyze the transfer of sulfate to position 6 of non-reducing N-acetylglucosamine (GlcNAc) residues. Preferentially acts on mannose-linked GlcNAc. Also able to catalyze the transfer of sulfate to position 6 of the N-acetylgalactosamine (GalNAc) residue of chondroitin. Also acts on core 2 mucin-type oligosaccharide and N-acetyllactosamine oligomer with a lower efficiency. Has weak or no activity toward keratan sulfate and oligosaccharides containing the Galbeta1-4GlcNAc. Catalyzes 6-O-sulfation of beta-benzyl GlcNAc but not alpha- or beta-benzyl GalNAc. The chain is Carbohydrate sulfotransferase 7 (Chst7) from Mus musculus (Mouse).